Consider the following 96-residue polypeptide: Interleukin-8 (96 aa).

The signal sequence occupies residues 1–22 (MTSKLAIALLATFMLSAALCEA). The residue at position 27 (Arg-27) is a Citrulline. 2 disulfides stabilise this stretch: Cys-34–Cys-61 and Cys-36–Cys-78.

The protein belongs to the intercrine alpha (chemokine CxC) family. In terms of assembly, homodimer. Interacts with TNFAIP6 (via Link domain); this interaction interferes with chemokine binding to glycosaminoglycans. Post-translationally, citrullination at Arg-27 prevents proteolysis, and dampens tissue inflammation, it also enhances leukocytosis, possibly through impaired chemokine clearance from the blood circulation.

Its subcellular location is the secreted. Functionally, chemotactic factor that mediates inflammatory response by attracting neutrophils, basophils, and T-cells to clear pathogens and protect the host from infection. Also plays an important role in neutrophil activation. Released in response to an inflammatory stimulus, exerts its effect by binding to the G-protein-coupled receptors CXCR1 and CXCR2, primarily found in neutrophils, monocytes and endothelial cells. G-protein heterotrimer (alpha, beta, gamma subunits) constitutively binds to CXCR1/CXCR2 receptor and activation by IL8 leads to beta and gamma subunits release from Galpha (GNAI2 in neutrophils) and activation of several downstream signaling pathways including PI3K and MAPK pathways. The chain is Interleukin-8 (CXCL8) from Dasypus novemcinctus (Nine-banded armadillo).